The following is an 880-amino-acid chain: Chaperone protein ClpB 1 (880 aa).

Positions 6 to 148 (PNKFTDKAWE…EASIKAVRGS (143 aa)) constitute a Clp R domain. Repeat regions lie at residues 9-74 (FTDK…TQRQ) and 85-148 (LGRS…VRGS). The interval 161-343 (EALQKFGRDL…RRFQQVYVDQ (183 aa)) is NBD1. An ATP-binding site is contributed by 208–215 (GEPGVGKT). Positions 344–554 (PSVENTISIL…IAEIVAKWTG (211 aa)) are linker. Residues 394–530 (IDLVDEAAAQ…KEAKLLELQS (137 aa)) are a coiled coil. Positions 564–775 (ERQKLLQLES…RVDDTILFHA (212 aa)) are NBD2. Residue 614–621 (GPTGVGKT) participates in ATP binding. Residues 776-880 (LSRSEMSHII…VKVSVTQITT (105 aa)) form a C-terminal region.

The protein belongs to the ClpA/ClpB family. In terms of assembly, homohexamer. The oligomerization is ATP-dependent.

The protein localises to the cytoplasm. Part of a stress-induced multi-chaperone system, it is involved in the recovery of the cell from heat-induced damage, in cooperation with DnaK, DnaJ and GrpE. Acts before DnaK, in the processing of protein aggregates. Protein binding stimulates the ATPase activity; ATP hydrolysis unfolds the denatured protein aggregates, which probably helps expose new hydrophobic binding sites on the surface of ClpB-bound aggregates, contributing to the solubilization and refolding of denatured protein aggregates by DnaK. The protein is Chaperone protein ClpB 1 (clpB1) of Nostoc sp. (strain PCC 7120 / SAG 25.82 / UTEX 2576).